Here is a 449-residue protein sequence, read N- to C-terminus: CBL-interacting protein kinase 31 (449 aa).

The 256-residue stretch at 20 to 275 (YELGRTIGEG…ISQILEDPWF (256 aa)) folds into the Protein kinase domain. Residues 26 to 34 (IGEGTFAKV) and Lys-49 each bind ATP. Catalysis depends on Asp-143, which acts as the Proton acceptor. The tract at residues 161–190 (DFGLSALTEQVKADGLLHTTCGTPNYVAPE) is activation loop. The NAF domain occupies 313–337 (DQPTSMNAFELISLNQALNLDNLFE).

Belongs to the protein kinase superfamily. CAMK Ser/Thr protein kinase family. SNF1 subfamily. May interact with CBL3. Requires Mn(2+) as cofactor. Post-translationally, autophosphorylated. As to expression, highly expressed in leaf blade and leaf sheath, but not in other tissues.

It catalyses the reaction L-seryl-[protein] + ATP = O-phospho-L-seryl-[protein] + ADP + H(+). It carries out the reaction L-threonyl-[protein] + ATP = O-phospho-L-threonyl-[protein] + ADP + H(+). Functionally, involved in cold stress tolerance. CIPK serine-threonine protein kinases interact with CBL proteins. Binding of a CBL protein to the regulatory NAF domain of CIPK protein lead to the activation of the kinase in a calcium-dependent manner. The chain is CBL-interacting protein kinase 31 (CIPK31) from Oryza sativa subsp. japonica (Rice).